Here is a 360-residue protein sequence, read N- to C-terminus: Proline-rich protein 11 (360 aa).

Disordered regions lie at residues 20-43 (KKKE…SPER) and 174-201 (PPTL…PPLA). Phosphothreonine is present on Thr33. Ser40 bears the Phosphoserine mark. The span at 175-201 (PTLPQPASHFPPPPPPPPLPPPPPPLA) shows a compositional bias: pro residues. The Phosphodegron motif lies at 285 to 291 (LITPGKS). The residue at position 287 (Thr287) is a Phosphothreonine. Ser291 carries the post-translational modification Phosphoserine. The D-box signature appears at 296–304 (RKLLRKVDV). The KEN box motif lies at 316 to 318 (KEN). Residues 325 to 330 (LTPVMT) carry the Phosphodegron motif. The interval 340–360 (AHPRSPTPTLPLSTSSFDEQN) is disordered. Ser344 is modified (phosphoserine). Thr346 and Thr348 each carry phosphothreonine. Positions 349 to 360 (LPLSTSSFDEQN) are enriched in low complexity.

Ubiquitinated. Rapidly degraded by the proteasome; degradation may involve FBXW7-specific phosphorylated phosphodegron motifs. As to expression, ubiquitously expressed.

Its subcellular location is the cytoplasm. The protein resides in the nucleus. Functionally, plays a critical role in cell cycle progression. The polypeptide is Proline-rich protein 11 (PRR11) (Homo sapiens (Human)).